An 84-amino-acid chain; its full sequence is Large ribosomal subunit protein bL27 (84 aa).

Positions 1 to 20 (MAHKKAGGSTRNGRDSNPKY) are disordered.

Belongs to the bacterial ribosomal protein bL27 family.

The protein is Large ribosomal subunit protein bL27 of Francisella tularensis subsp. tularensis (strain FSC 198).